Reading from the N-terminus, the 209-residue chain is MELILKYFPNLSEQQKTQFAALYDLYTDWNSKINVISRKDITNLYEHHVLHSLGIAKVINFTPDTQIMDLGTGGGFPGIPLAILFPEVQFHLVDSIGKKVKVATEIANAIGLKNVTFRHCRAEEEKRKFDFVVSRAVMPLGDLIKIIRKNIRQEQHNALPNGLICLKGGELEQETMPVKHKTMLYDLKNEFTEDFFKTKKVVYVTISGL.

Residues Gly71, Phe76, 122-123, and Arg135 contribute to the S-adenosyl-L-methionine site; that span reads AE.

Belongs to the methyltransferase superfamily. RNA methyltransferase RsmG family.

It is found in the cytoplasm. Functionally, specifically methylates the N7 position of a guanine in 16S rRNA. The polypeptide is Ribosomal RNA small subunit methyltransferase G (Phocaeicola vulgatus (strain ATCC 8482 / DSM 1447 / JCM 5826 / CCUG 4940 / NBRC 14291 / NCTC 11154) (Bacteroides vulgatus)).